Reading from the N-terminus, the 415-residue chain is Small ribosomal subunit protein uS5m (415 aa).

Residues methionine 1–valine 31 are disordered. An S5 DRBM domain is found at phenylalanine 131–valine 197. The interval glycine 396–aspartate 415 is disordered.

The protein belongs to the universal ribosomal protein uS5 family. As to quaternary structure, component of the mitochondrial ribosome small subunit (28S) which comprises a 12S rRNA and about 30 distinct proteins.

Its subcellular location is the mitochondrion. The sequence is that of Small ribosomal subunit protein uS5m (mrps-5) from Caenorhabditis briggsae.